A 265-amino-acid polypeptide reads, in one-letter code: MIESQRHSYHLVDPSPWPISGSLGALATTVGGVMYMHPFQGGATLLSLGLIFLLYTMFVWWRDVLRESTLEGHHTKVVQLGLRYGSILFIVSEVMFLFAFFWASSHSSLAPTVEIGGIWPPKGIGVLDPWEIPFLNTPILLSSGAAVTWAHHAILAGKEKRAVYALVATVSLAIVFTGFQGMEYYQAPPTISDSIYGSTFYLATGFHGFHVIIGTLFSIICGIRQYLGHLTKEHHVGFEAAAWYWHFVDVVRLFLFVSIYWWGGI.

7 helical membrane-spanning segments follow: residues 16–36 (PWPISGSLGALATTVGGVMYM), 41–61 (GGATLLSLGLIFLLYTMFVWW), 84–104 (YGSILFIVSEVMFLFAFFWAS), 137–157 (TPILLSSGAAVTWAHHAILAG), 162–182 (AVYALVATVSLAIVFTGFQGM), 200–220 (FYLATGFHGFHVIIGTLFSII), and 245–265 (WHFVDVVRLFLFVSIYWWGGI).

The protein belongs to the cytochrome c oxidase subunit 3 family. As to quaternary structure, component of the cytochrome c oxidase (complex IV, CIV), a multisubunit enzyme composed of a catalytic core of 3 subunits and several supernumerary subunits. The complex exists as a monomer or a dimer and forms supercomplexes (SCs) in the inner mitochondrial membrane with ubiquinol-cytochrome c oxidoreductase (cytochrome b-c1 complex, complex III, CIII).

It localises to the mitochondrion inner membrane. The catalysed reaction is 4 Fe(II)-[cytochrome c] + O2 + 8 H(+)(in) = 4 Fe(III)-[cytochrome c] + 2 H2O + 4 H(+)(out). Its function is as follows. Component of the cytochrome c oxidase, the last enzyme in the mitochondrial electron transport chain which drives oxidative phosphorylation. The respiratory chain contains 3 multisubunit complexes succinate dehydrogenase (complex II, CII), ubiquinol-cytochrome c oxidoreductase (cytochrome b-c1 complex, complex III, CIII) and cytochrome c oxidase (complex IV, CIV), that cooperate to transfer electrons derived from NADH and succinate to molecular oxygen, creating an electrochemical gradient over the inner membrane that drives transmembrane transport and the ATP synthase. Cytochrome c oxidase is the component of the respiratory chain that catalyzes the reduction of oxygen to water. Electrons originating from reduced cytochrome c in the intermembrane space (IMS) are transferred via the dinuclear copper A center (CU(A)) of subunit 2 and heme A of subunit 1 to the active site in subunit 1, a binuclear center (BNC) formed by heme A3 and copper B (CU(B)). The BNC reduces molecular oxygen to 2 water molecules using 4 electrons from cytochrome c in the IMS and 4 protons from the mitochondrial matrix. The chain is Cytochrome c oxidase subunit 3 (COX3) from Oenothera berteroana (Bertero's evening primrose).